Here is a 124-residue protein sequence, read N- to C-terminus: Putative iron-sulfur cluster insertion protein ErpA (124 aa).

Positions 52, 116, and 118 each coordinate iron-sulfur cluster.

This sequence belongs to the HesB/IscA family. As to quaternary structure, homodimer. Iron-sulfur cluster serves as cofactor.

Its function is as follows. Required for insertion of 4Fe-4S clusters. This Delftia acidovorans (strain DSM 14801 / SPH-1) protein is Putative iron-sulfur cluster insertion protein ErpA.